The primary structure comprises 153 residues: Natriuretic peptides A (153 aa).

An N-terminal signal peptide occupies residues 1–25 (MGSFSTITASFLLFLACQLLWQTGA). 2 consecutive propeptides follow at residues 26–123 (NPVY…AAPR) and 93–103 (DGGALGRGSWD). The segment at 62–104 (VLSEQNEEAGAALSPLPEVPPWAGEVNPAQRDGGALGRGSWDS) is disordered. Ser129 bears the Phosphoserine mark. Cysteines 130 and 146 form a disulfide. The segment at 147-151 (NSFRY) is important for degradation of atrial natriuretic peptide by IDE.

It belongs to the natriuretic peptide family. Homodimer; disulfide-linked antiparallel dimer. The precursor molecule is proteolytically cleaved by CORIN at Arg-123 to produce the atrial natriuretic peptide. Undergoes further proteolytic cleavage by unknown proteases to give rise to long-acting natriuretic peptide, vessel dilator and kaliuretic peptide. Additional processing gives rise to the auriculin and atriopeptin peptides. In the kidneys, alternative processing by an unknown protease results in the peptide urodilatin. In terms of processing, cleavage by MME initiates degradation of the factor and thereby regulates its activity. Degradation by IDE results in reduced activation of NPR1 (in vitro). During IDE degradation, the resulting products can temporarily stimulate NPR2 to produce cGMP, before the fragments are completely degraded and inactivated by IDE (in vitro). Post-translationally, degraded by IDE. Phosphorylation on Ser-129 decreases vasorelaxant activity.

The protein resides in the secreted. It localises to the perikaryon. The protein localises to the cell projection. Functionally, hormone that plays a key role in mediating cardio-renal homeostasis, and is involved in vascular remodeling and regulating energy metabolism. Acts by specifically binding and stimulating NPR1 to produce cGMP, which in turn activates effector proteins, such as PRKG1, that drive various biological responses. Regulates vasodilation, natriuresis, diuresis and aldosterone synthesis and is therefore essential for regulating blood pressure, controlling the extracellular fluid volume and maintaining the fluid-electrolyte balance. Also involved in inhibiting cardiac remodeling and cardiac hypertrophy by inducing cardiomyocyte apoptosis and attenuating the growth of cardiomyocytes and fibroblasts. Plays a role in female pregnancy by promoting trophoblast invasion and spiral artery remodeling in uterus, and thus prevents pregnancy-induced hypertension. In adipose tissue, acts in various cGMP- and PKG-dependent pathways to regulate lipid metabolism and energy homeostasis. This includes up-regulating lipid metabolism and mitochondrial oxygen utilization by activating the AMP-activated protein kinase (AMPK), and increasing energy expenditure by acting via MAPK11 to promote the UCP1-dependent thermogenesis of brown adipose tissue. Binds the clearance receptor NPR3 which removes the hormone from circulation. May have a role in cardio-renal homeostasis through regulation of natriuresis, diuresis, vasodilation, and inhibiting aldosterone synthesis. In vitro, promotes the production of cGMP and induces vasodilation. May promote natriuresis, at least in part, by enhancing prostaglandin E2 synthesis resulting in the inhibition of renal Na+-K+-ATPase. However reports on the involvement of this peptide in mammal blood volume and blood pressure homeostasis are conflicting; according to a report, in vivo it is not sufficient to activate cGMP and does not inhibit collecting duct transport nor effect diuresis and natriuresis. Appears to bind to specific receptors that are distinct from the receptors bound by atrial natriuretic peptide and vessel dilator. Possibly enhances protein excretion in urine by decreasing proximal tubular protein reabsorption. In terms of biological role, may have a role in cardio-renal homeostasis through regulation of natriuresis, diuresis, and vasodilation. In vitro, promotes the production of cGMP and induces vasodilation. May promote natriuresis, at least in part, by enhancing prostaglandin E2 synthesis resulting in the inhibition of renal Na+-K+-ATPase. However reports on the involvement of this peptide in mammal blood volume and blood pressure homeostasis are conflicting; according to a report it is not sufficient to activate cGMP and does not inhibit collecting duct transport nor effect diuresis and natriuresis. Appears to bind to specific receptors that are distinct from the receptors bound by the atrial natriuretic and long-acting natriuretic peptides. Possibly functions in protein excretion in urine by maintaining the integrity of the proximal tubules and enhancing protein excretion by decreasing proximal tubular protein reabsorption. Its function is as follows. May have a role in cardio-renal homeostasis through regulation of diuresis and inhibiting aldosterone synthesis. In vitro, promotes the production of cGMP and induces vasodilation. May promote natriuresis, at least in part, by enhancing prostaglandin E2 synthesis resulting in the inhibition of renal Na+-K+-ATPase. May have a role in potassium excretion but not sodium excretion (natriuresis). Possibly enhances protein excretion in urine by decreasing proximal tubular protein reabsorption. Functionally, hormone produced in the kidneys that appears to be important for maintaining cardio-renal homeostasis. Mediates vasodilation, natriuresis and diuresis primarily in the renal system, in order to maintain the extracellular fluid volume and control the fluid-electrolyte balance. Specifically binds and stimulates cGMP production by renal transmembrane receptors, likely NPR1. Urodilatin not ANP, may be the natriuretic peptide responsible for the regulation of sodium and water homeostasis in the kidney. May have a role in cardio-renal homeostasis through regulation of natriuresis and vasodilation. In vivo promotes natriuresis and in vitro, vasodilates renal artery strips. In terms of biological role, may have a role in cardio-renal homeostasis through regulation of regulation of natriuresis and vasodilation. In vivo promotes natriuresis. In vitro, vasodilates intestinal smooth muscle but not smooth muscle strips. Its function is as follows. May have a role in cardio-renal homeostasis through regulation of natriuresis and vasodilation. In vivo promotes natriuresis. In vitro, selectively vasodilates intestinal and vascular smooth muscle strips. Functionally, may have a role in cardio-renal homeostasis through regulation of natriuresis and vasodilation. In vivo promotes natriuresis. In vitro, selectively vasodilates intestinal smooth muscle but not vascular smooth muscle strips. This chain is Natriuretic peptides A (NPPA), found in Felis catus (Cat).